The primary structure comprises 260 residues: Global transcriptional regulator CodY (260 aa).

The interval 1–159 (MPNLLEKTRK…SSTVVGIQLL (159 aa)) is GAF domain. Positions 207–226 (ASVIADRIGITRSVIVNALR) form a DNA-binding region, H-T-H motif.

This sequence belongs to the CodY family.

The protein localises to the cytoplasm. Functionally, DNA-binding global transcriptional regulator which is involved in the adaptive response to starvation and acts by directly or indirectly controlling the expression of numerous genes in response to nutrient availability. During rapid exponential growth, CodY is highly active and represses genes whose products allow adaptation to nutrient depletion. This is Global transcriptional regulator CodY from Streptococcus uberis (strain ATCC BAA-854 / 0140J).